A 107-amino-acid chain; its full sequence is Thioredoxin (107 aa).

A Thioredoxin domain is found at 2-107 (AGVLKNVTDD…ALLRPGPVPR (106 aa)). Residues Cys33 and Cys36 are joined by a disulfide bond.

The protein belongs to the thioredoxin family.

Functionally, component of the thioredoxin-thioredoxin reductase system. Participates in various redox reactions through the reversible oxidation of its active center dithiol to a disulfide and catalyzes dithiol-disulfide exchange reactions. This chain is Thioredoxin (trxA), found in Streptomyces clavuligerus.